Here is a 417-residue protein sequence, read N- to C-terminus: NADH-quinone oxidoreductase subunit D (417 aa).

It belongs to the complex I 49 kDa subunit family. In terms of assembly, NDH-1 is composed of 14 different subunits. Subunits NuoB, C, D, E, F, and G constitute the peripheral sector of the complex.

The protein localises to the cell inner membrane. It catalyses the reaction a quinone + NADH + 5 H(+)(in) = a quinol + NAD(+) + 4 H(+)(out). NDH-1 shuttles electrons from NADH, via FMN and iron-sulfur (Fe-S) centers, to quinones in the respiratory chain. The immediate electron acceptor for the enzyme in this species is believed to be ubiquinone. Couples the redox reaction to proton translocation (for every two electrons transferred, four hydrogen ions are translocated across the cytoplasmic membrane), and thus conserves the redox energy in a proton gradient. The polypeptide is NADH-quinone oxidoreductase subunit D (Hydrogenovibrio crunogenus (strain DSM 25203 / XCL-2) (Thiomicrospira crunogena)).